The following is a 620-amino-acid chain: UvrABC system protein C (620 aa).

Residues 13-92 (DKPGVYIMKN…IKKYSPRYNI (80 aa)) form the GIY-YIG domain. The region spanning 204-239 (TSIIKKLKLEMEKAAEELEFEKAAKIRDRILAIELI) is the UVR domain.

The protein belongs to the UvrC family. Interacts with UvrB in an incision complex.

It is found in the cytoplasm. In terms of biological role, the UvrABC repair system catalyzes the recognition and processing of DNA lesions. UvrC both incises the 5' and 3' sides of the lesion. The N-terminal half is responsible for the 3' incision and the C-terminal half is responsible for the 5' incision. In Clostridium perfringens (strain 13 / Type A), this protein is UvrABC system protein C.